A 338-amino-acid polypeptide reads, in one-letter code: MPRAILEINSERIRHNVKKLSEFSGKKVIAVIKADAYGIGSIQMAKILEPIEEVDAFAVACVEEGVELRKMGIKKEILILGGVLKDEVPLVEEYFLTPVVSDIEHLRAIGNRDIKFHVKYDTGMGRLGFLNEVIHDPRVEGIMSHLSSPADEEFSKLQIKKFEEIVKKYTKVEKIHMESSAGVVYRVPFTTHIRVGLAMYGEKPLKNYPVDIKPALTLKAKLISVKELPENYPVSYSRTYVTKKKTKTGVVAFGYADGLMKTLSNRSYLLYKGEKLPIFGNITMDMTIVDLKNTDAKVGDWVYVVNEERTFTELAREAGTIPYELMCNLSKRIKRVVV.

The Proton acceptor; specific for D-alanine role is filled by Lys33. N6-(pyridoxal phosphate)lysine is present on Lys33. Substrate is bound at residue Arg126. Tyr236 serves as the catalytic Proton acceptor; specific for L-alanine. Position 284 (Met284) interacts with substrate.

This sequence belongs to the alanine racemase family. The cofactor is pyridoxal 5'-phosphate.

It carries out the reaction L-alanine = D-alanine. It functions in the pathway amino-acid biosynthesis; D-alanine biosynthesis; D-alanine from L-alanine: step 1/1. Its function is as follows. Catalyzes the interconversion of L-alanine and D-alanine. May also act on other amino acids. The protein is Alanine racemase (alr) of Aquifex aeolicus (strain VF5).